The sequence spans 682 residues: Potassium-transporting ATPase ATP-binding subunit (682 aa).

4 helical membrane-spanning segments follow: residues 34-54 (PVMF…LAMV), 58-78 (IAGS…TVLF), 219-239 (IALT…TATL), and 254-274 (VLVA…LSAI). Aspartate 307 serves as the catalytic 4-aspartylphosphate intermediate. ATP is bound by residues aspartate 344, glutamate 348, 377-384 (FTAQSRMS), and lysine 395. Mg(2+) is bound by residues aspartate 518 and aspartate 522. 3 helical membrane-spanning segments follow: residues 588-608 (FAII…LNVM), 616-636 (AILS…PLAL), and 662-682 (LLVP…LGLA).

Belongs to the cation transport ATPase (P-type) (TC 3.A.3) family. Type IA subfamily. The system is composed of three essential subunits: KdpA, KdpB and KdpC.

The protein resides in the cell inner membrane. The catalysed reaction is K(+)(out) + ATP + H2O = K(+)(in) + ADP + phosphate + H(+). Functionally, part of the high-affinity ATP-driven potassium transport (or Kdp) system, which catalyzes the hydrolysis of ATP coupled with the electrogenic transport of potassium into the cytoplasm. This subunit is responsible for energy coupling to the transport system and for the release of the potassium ions to the cytoplasm. In Salmonella dublin (strain CT_02021853), this protein is Potassium-transporting ATPase ATP-binding subunit.